A 277-amino-acid chain; its full sequence is 4-diphosphocytidyl-2-C-methyl-D-erythritol kinase (277 aa).

The active site involves Lys9. Position 91-101 (91-101 (PMGAGLGGGSS)) interacts with ATP. The active site involves Asp133.

Belongs to the GHMP kinase family. IspE subfamily.

It catalyses the reaction 4-CDP-2-C-methyl-D-erythritol + ATP = 4-CDP-2-C-methyl-D-erythritol 2-phosphate + ADP + H(+). The protein operates within isoprenoid biosynthesis; isopentenyl diphosphate biosynthesis via DXP pathway; isopentenyl diphosphate from 1-deoxy-D-xylulose 5-phosphate: step 3/6. Catalyzes the phosphorylation of the position 2 hydroxy group of 4-diphosphocytidyl-2C-methyl-D-erythritol. This Acinetobacter baumannii (strain AB307-0294) protein is 4-diphosphocytidyl-2-C-methyl-D-erythritol kinase.